The sequence spans 566 residues: Solute carrier family 22 member 16 (566 aa).

Residues 20 to 40 form a helical membrane-spanning segment; it reads FASAFQTISCGIHYLASVFIA. N-linked (GlcNAc...) asparagine glycans are attached at residues N52, N60, and N112. The next 5 membrane-spanning stretches (helical) occupy residues 149–169, 176–196, 201–221, 237–257, and 261–281; these read LIQP…GDIA, PIIW…AFTF, FVIV…VVFV, MHVH…GFLV, and WIYQ…CWML. N344 is a glycosylation site (N-linked (GlcNAc...) asparagine). Helical transmembrane passes span 351–371, 381–401, 408–428, 436–456, 468–488, and 493–513; these read TITV…FALN, LNLF…CLGM, NTLA…MLIP, IAMS…IYLY, LAVG…PFCV, and VWIF…GILT.

This sequence belongs to the major facilitator (TC 2.A.1) superfamily. Organic cation transporter (TC 2.A.1.19) family.

The protein localises to the membrane. Functionally, high affinity carnitine transporter. The sequence is that of Solute carrier family 22 member 16 (slc22a16) from Xenopus laevis (African clawed frog).